A 55-amino-acid chain; its full sequence is Large ribosomal subunit protein bL33 (55 aa).

This sequence belongs to the bacterial ribosomal protein bL33 family.

This is Large ribosomal subunit protein bL33 from Aliivibrio salmonicida (strain LFI1238) (Vibrio salmonicida (strain LFI1238)).